Reading from the N-terminus, the 375-residue chain is Muconate cycloisomerase 1 (375 aa).

Residue Lys171 is the Proton acceptor of the active site. The Mn(2+) site is built by Asp200, Glu226, and Asp251. Catalysis depends on Glu329, which acts as the Proton donor.

This sequence belongs to the mandelate racemase/muconate lactonizing enzyme family. Homooctamer. Mn(2+) is required as a cofactor.

It carries out the reaction (S)-muconolactone = cis,cis-muconate + H(+). The protein operates within aromatic compound metabolism; beta-ketoadipate pathway; 5-oxo-4,5-dihydro-2-furylacetate from catechol: step 2/3. In terms of biological role, catalyzes a syn cycloisomerization. This Pseudomonas putida (Arthrobacter siderocapsulatus) protein is Muconate cycloisomerase 1 (catB).